A 240-amino-acid chain; its full sequence is Methylthioribulose-1-phosphate dehydratase (240 aa).

The span at 1–10 (MAQEIEKTNN) shows a compositional bias: basic and acidic residues. Positions 1 to 20 (MAQEIEKTNNDHLVQSSDPE) are disordered. Cysteine 100 contributes to the substrate binding site. Zn(2+)-binding residues include histidine 117 and histidine 119. Glutamate 146 functions as the Proton donor/acceptor in the catalytic mechanism. Histidine 202 contributes to the Zn(2+) binding site.

This sequence belongs to the aldolase class II family. MtnB subfamily. The cofactor is Zn(2+).

The protein resides in the cytoplasm. The catalysed reaction is 5-(methylsulfanyl)-D-ribulose 1-phosphate = 5-methylsulfanyl-2,3-dioxopentyl phosphate + H2O. It functions in the pathway amino-acid biosynthesis; L-methionine biosynthesis via salvage pathway; L-methionine from S-methyl-5-thio-alpha-D-ribose 1-phosphate: step 2/6. Its function is as follows. Catalyzes the dehydration of methylthioribulose-1-phosphate (MTRu-1-P) into 2,3-diketo-5-methylthiopentyl-1-phosphate (DK-MTP-1-P). The sequence is that of Methylthioribulose-1-phosphate dehydratase from Aspergillus fumigatus (strain CBS 144.89 / FGSC A1163 / CEA10) (Neosartorya fumigata).